We begin with the raw amino-acid sequence, 856 residues long: MNGATATATAAVGAEEEGGAREGSRRRDSVESAGDGRRRTKVSRACDQCRRKKIKCEYQEDAQSCSGCRKNSERCAFERVPLKRGPSKGYTRGEGAGDGARETEGARGELDTSRADGKAAPVSLPPLHYYLPISNGQPGGAPAQAPAAPFPPMKQQFWKVPYYENQMQRRSSLESVNSDASGPQSQQETYAASSASTSSHQRTSRSYFPSSDGASALFQEPCSSSYPPPLVRSSSTGGQLQQLPAPQYPYSQFAVALSGSTSASSQSVQLRTSATGSTSLPEDSSPSSSNAYSPQLRAHCMSESLTTPTAGSKTGGSVKRRKRLSEPADPIVPLSAREPRQAGHIGLPLQAQQATGKTGVICGKLSDAELIDAYYEYVHVNYPIIPINKETLTNEILLVNTQPISEVHEMNNYILYWFRVALELLLHVASDKTNQDTASGMDSNAVHDGGLYAHRGDFKQNEEHHVPHQSQLLAALNDCFRKLLDIHPKICAYQESTSPKVTTIYLSTYIIINYMLAMLGEDNTFVLGTSVTVFNEFKIYRLLVLHEVADEPGDDSADVERHGFELLYKRLYYSLLVFDALQSCCFGAPRLASLPISHLVEPLFAPPPPLDSAKWAVESDAARREPLLASIRLGALLTELCETRVLAGALPRAPTPALRAPRPFRVAPPADDSVPGAFFHALAAQRALLDRLLAIPAHPAFAADAPPDATVDLCAQLGDAICRFTSCVLDTLVRAGPRPASPFAAALSRALHHAINLSRNIPTSLIGCIIGTAVHHSRDRDLIVALSRCMSDMIQIQGLTHCLRPCAPPRPRARVSCDLRRLYGHDGPPASPHQVMLHQFIDIAWRLLRNDELGWF.

The segment covering Met1–Gly13 has biased composition (low complexity). Positions Met1–Val42 are disordered. Residues Gly18 to Arg37 are compositionally biased toward basic and acidic residues. Positions Cys46–Cys75 form a DNA-binding region, zn(2)-C6 fungal-type. 3 disordered regions span residues Lys83–Pro121, Gln168–Pro244, and Thr261–Pro330. Positions Gly99–Gly117 are enriched in basic and acidic residues. Over residues Gln168–Pro183 the composition is skewed to polar residues. 3 stretches are compositionally biased toward low complexity: residues Gln184–Tyr207, Thr261–Leu270, and Ser277–Pro294. The span at Glu303–Ser312 shows a compositional bias: polar residues.

The protein belongs to the EDS1/RGT1 family.

It is found in the nucleus. The protein localises to the cytoplasm. Its function is as follows. Glucose-responsive transcription factor that regulates expression of several glucose transporter (HXT) genes in response to glucose. In the absence of glucose, it functions as a transcriptional repressor, whereas high concentrations of glucose cause it to function as a transcriptional activator. In cells growing on low levels of glucose, has a neutral role, neither repressing nor activating transcription. This chain is Glucose transport transcription regulator RGT1 (RGT1), found in Eremothecium gossypii (strain ATCC 10895 / CBS 109.51 / FGSC 9923 / NRRL Y-1056) (Yeast).